Here is a 260-residue protein sequence, read N- to C-terminus: Ubiquinone/menaquinone biosynthesis C-methyltransferase UbiE (260 aa).

S-adenosyl-L-methionine is bound by residues Thr-83, Asp-104, and 132 to 133; that span reads NA.

Belongs to the class I-like SAM-binding methyltransferase superfamily. MenG/UbiE family.

The catalysed reaction is a 2-demethylmenaquinol + S-adenosyl-L-methionine = a menaquinol + S-adenosyl-L-homocysteine + H(+). It carries out the reaction a 2-methoxy-6-(all-trans-polyprenyl)benzene-1,4-diol + S-adenosyl-L-methionine = a 5-methoxy-2-methyl-3-(all-trans-polyprenyl)benzene-1,4-diol + S-adenosyl-L-homocysteine + H(+). The protein operates within quinol/quinone metabolism; menaquinone biosynthesis; menaquinol from 1,4-dihydroxy-2-naphthoate: step 2/2. It participates in cofactor biosynthesis; ubiquinone biosynthesis. Methyltransferase required for the conversion of demethylmenaquinol (DMKH2) to menaquinol (MKH2) and the conversion of 2-polyprenyl-6-methoxy-1,4-benzoquinol (DDMQH2) to 2-polyprenyl-3-methyl-6-methoxy-1,4-benzoquinol (DMQH2). In Bartonella henselae (strain ATCC 49882 / DSM 28221 / CCUG 30454 / Houston 1) (Rochalimaea henselae), this protein is Ubiquinone/menaquinone biosynthesis C-methyltransferase UbiE.